Reading from the N-terminus, the 2871-residue chain is Fibrillin-1 (2871 aa).

The signal sequence occupies residues 1–24 (MRRGRLLEIALGFTVLLASYTSHG). The propeptide occupies 25 to 44 (ADANLEAGNVKETRASRAKR). A fibrillin unique N-terminal (FUN) domain region spans residues 45-81 (RGGGGHDALKGPNVCGSRYNAYCCPGWKTLPGGNQCI). Positions 45 to 450 (RGGGGHDALK…PPRVLPVNVT (406 aa)) are N-terminal domain. Disulfide bonds link Cys-59-Cys-68, Cys-67-Cys-80, Cys-85-Cys-94, Cys-89-Cys-100, Cys-102-Cys-111, Cys-119-Cys-129, Cys-123-Cys-134, Cys-136-Cys-145, Cys-150-Cys-160, Cys-154-Cys-166, and Cys-168-Cys-177. EGF-like domains are found at residues 81-112 (IVPI…PSCG), 115-146 (SIQH…THCG), and 147-178 (QPVC…PQCE). Positions 119–329 (CNIRCMNGGS…YTSPDGTRCI (211 aa)) are interaction with MFAP4. Residues 184–236 (GPCFTVISNQMCQGQLSGIVCTKTLCCATVGRAWGHPCEMCPAQPHPCRRGFI) enclose the TB 1 domain. The segment at 195 to 221 (CQGQLSGIVCTKTLCCATVGRAWGHPC) is hybrid domain 1. In terms of domain architecture, EGF-like 4; calcium-binding spans 246 to 287 (DVDECQAIPGLCQGGNCINTVGSFECKCPAGHKLNEVSQKCE). 6 cysteine pairs are disulfide-bonded: Cys-250-Cys-262, Cys-257-Cys-271, Cys-273-Cys-286, Cys-292-Cys-304, Cys-299-Cys-313, and Cys-315-Cys-328. An O-linked (Glc) serine glycan is attached at Ser-268. Positions 288-329 (DIDECSTIPGICEGGECTNTVSSYFCKCPPGFYTSPDGTRCI) constitute an EGF-like 5; calcium-binding domain. The region spanning 334-389 (GYCYTALTNGRCSNQLPQSITKMQCCCDAGRCWSPGVTVAPEMCPIRATEDFNKLC) is the TB 2 domain. The N-linked (GlcNAc...) asparagine glycan is linked to Asn-448. The 41-residue stretch at 449-489 (VTDYCQLVRYLCQNGRCIPTPGSYRCECNKGFQLDLRGECI) folds into the EGF-like 6 domain. Cystine bridges form between Cys-453/Cys-465, Cys-460/Cys-474, Cys-476/Cys-488, Cys-494/Cys-504, Cys-499/Cys-513, Cys-515/Cys-528, Cys-534/Cys-546, Cys-541/Cys-555, Cys-557/Cys-570, Cys-576/Cys-587, Cys-582/Cys-596, Cys-598/Cys-611, Cys-617/Cys-628, Cys-623/Cys-637, and Cys-639/Cys-652. A glycan (O-linked (Glc) serine) is linked at Ser-471. In terms of domain architecture, EGF-like 7; calcium-binding spans 490 to 529 (DVDECEKNPCAGGECINNQGSYTCQCRAGYQSTLTRTECR). An O-linked (Glc) serine glycan is attached at Ser-510. One can recognise an EGF-like 8; calcium-binding domain in the interval 530-571 (DIDECLQNGRICNNGRCINTDGSFHCVCNAGFHVTRDGKNCE). Ser-552 is a glycosylation site (O-linked (Glc) serine). The 41-residue stretch at 572-612 (DMDECSIRNMCLNGMCINEDGSFKCICKPGFQLASDGRYCK) folds into the EGF-like 9; calcium-binding domain. O-linked (Glc) serine glycosylation occurs at Ser-593. The EGF-like 10; calcium-binding domain occupies 613–653 (DINECETPGICMNGRCVNTDGSYRCECFPGLAVGLDGRVCV). Residue Ser-634 is glycosylated (O-linked (Glc) serine). A TB 3 domain is found at 659 to 711 (STCYGGYKRGQCIKPLFGAVTKSECCCASTEYAFGEPCQPCPAQNSAEYQALC). Residues 723-764 (DINECALDPDICPNGICENLRGTYKCICNSGYEVDSTGKNCV) form the EGF-like 11; calcium-binding domain. Intrachain disulfides connect Cys-727-Cys-739, Cys-734-Cys-748, Cys-750-Cys-763, Cys-769-Cys-781, Cys-776-Cys-790, Cys-792-Cys-805, Cys-811-Cys-821, Cys-816-Cys-830, Cys-832-Cys-845, Cys-853-Cys-875, Cys-862-Cys-887, Cys-876-Cys-890, Cys-896-Cys-908, Cys-914-Cys-926, Cys-921-Cys-935, and Cys-937-Cys-950. The EGF-like 12; calcium-binding domain maps to 765-806 (DINECVLNSLLCDNGQCRNTPGSFVCTCPKGFIYKPDLKTCE). O-linked (Glc) serine glycosylation is present at Ser-787. Residues 807-846 (DIDECESSPCINGVCKNSPGSFICECSSESTLDPTKTICI) form the EGF-like 13; calcium-binding domain. Ser-827 carries an O-linked (Glc) serine glycan. Positions 851–902 (GTCWQTVIDGRCEININGATLKSQCCSSLGAAWGSPCTLCQVDPICGKGYSR) constitute a TB 4 domain. Positions 862 to 887 (CEININGATLKSQCCSSLGAAWGSPC) are hybrid domain 2. One can recognise an EGF-like 14; calcium-binding domain in the interval 910-951 (DIDECEVFPGVCKNGLCVNTRGSFKCQCPSGMTLDATGRICL). A TB 5 domain is found at 956–1008 (ETCFLRYEDEECTLPIAGRHRMDACCCSVGAAWGTEECEECPMRNTPEYEELC). Positions 1028 to 1069 (DINECKMIPSLCTHGKCRNTIGSFKCRCDSGFALDSEERNCT) constitute an EGF-like 15; calcium-binding domain. Cystine bridges form between Cys-1032-Cys-1044, Cys-1039-Cys-1053, Cys-1055-Cys-1068, Cys-1074-Cys-1086, Cys-1081-Cys-1095, Cys-1097-Cys-1111, Cys-1117-Cys-1129, Cys-1124-Cys-1138, Cys-1140-Cys-1153, Cys-1159-Cys-1171, Cys-1166-Cys-1180, Cys-1182-Cys-1195, Cys-1201-Cys-1212, Cys-1208-Cys-1221, Cys-1223-Cys-1236, Cys-1242-Cys-1254, Cys-1249-Cys-1263, Cys-1265-Cys-1278, Cys-1284-Cys-1296, Cys-1291-Cys-1305, Cys-1307-Cys-1320, Cys-1326-Cys-1339, Cys-1333-Cys-1348, Cys-1350-Cys-1361, Cys-1367-Cys-1380, Cys-1374-Cys-1389, Cys-1391-Cys-1402, Cys-1408-Cys-1420, Cys-1415-Cys-1429, Cys-1431-Cys-1444, Cys-1450-Cys-1461, Cys-1456-Cys-1470, Cys-1472-Cys-1485, Cys-1491-Cys-1502, Cys-1497-Cys-1511, Cys-1513-Cys-1526, Cys-1534-Cys-1562, Cys-1549-Cys-1574, Cys-1563-Cys-1577, Cys-1564-Cys-1589, Cys-1610-Cys-1622, Cys-1617-Cys-1631, Cys-1633-Cys-1646, Cys-1652-Cys-1663, Cys-1658-Cys-1672, and Cys-1674-Cys-1687. Ser-1050 is a glycosylation site (O-linked (Glc) serine). An N-linked (GlcNAc...) asparagine glycan is attached at Asn-1067. The region spanning 1070 to 1112 (DIDECRISPDLCGRGQCVNTPGDFECKCDEGYESGFMMMKNCM) is the EGF-like 16; calcium-binding domain. An EGF-like 17; calcium-binding domain is found at 1113 to 1154 (DIDECQRDPLLCRGGVCHNTEGSYRCECPPGHQLSPNISACI). A glycan (O-linked (Glc) serine) is linked at Ser-1135. Asn-1149 is a glycosylation site (N-linked (GlcNAc...) asparagine). The 42-residue stretch at 1155–1196 (DINECELSAHLCPNGRCVNLIGKYQCACNPGYHSTPDRLFCV) folds into the EGF-like 18; calcium-binding domain. Residues 1197 to 1237 (DIDECSIMNGGCETFCTNSEGSYECSCQPGFALMPDQRSCT) enclose the EGF-like 19; calcium-binding domain. Residue Ser-1218 is glycosylated (O-linked (Glc) serine). The EGF-like 20; calcium-binding domain occupies 1238–1279 (DIDECEDNPNICDGGQCTNIPGEYRCLCYDGFMASEDMKTCV). An EGF-like 21; calcium-binding domain is found at 1280–1321 (DVNECDLNPNICLSGTCENTKGSFICHCDMGYSGKKGKTGCT). The O-linked (Glc) serine glycan is linked to Ser-1302. Positions 1322-1362 (DINECEIGAHNCGKHAVCTNTAGSFKCSCSPGWIGDGIKCT) constitute an EGF-like 22; calcium-binding domain. Ser-1345 carries an O-linked (Glc) serine glycan. The 41-residue stretch at 1363–1403 (DLDECSNGTHMCSQHADCKNTMGSYRCLCKEGYTGDGFTCT) folds into the EGF-like 23; calcium-binding domain. Asn-1369 carries N-linked (GlcNAc...) asparagine glycosylation. Ser-1386 carries O-linked (Glc) serine glycosylation. The EGF-like 24; calcium-binding domain maps to 1404-1445 (DLDECSENLNLCGNGQCLNAPGGYRCECDMGFVPSADGKACE). Residues 1446-1486 (DIDECSLPNICVFGTCHNLPGLFRCECEIGYELDRSGGNCT) form the EGF-like 25; calcium-binding domain. Residue Asn-1484 is glycosylated (N-linked (GlcNAc...) asparagine). Positions 1487–1527 (DVNECLDPTTCISGNCVNTPGSYICDCPPDFELNPTRVGCV) constitute an EGF-like 26; calcium-binding domain. Ser-1508 is a glycosylation site (O-linked (Glc) serine). Positions 1528–2731 (DTRSGNCYLD…GYPKRGRKRR (1204 aa)) are C-terminal domain. The TB 6 domain maps to 1532 to 1589 (GNCYLDIRPRGDNGDTACSNEIGVGVSKASCCCSLGKAWGTPCEMCPAVNTSEYKILC). The Cell attachment site motif lies at 1541–1543 (RGD). Asn-1581 carries an N-linked (GlcNAc...) asparagine glycan. The region spanning 1606–1647 (DIDECQELPGLCQGGKCINTFGSFQCRCPTGYYLNEDTRVCD) is the EGF-like 27; calcium-binding domain. A glycan (O-linked (Glc) serine) is linked at Ser-1628. An EGF-like 28; calcium-binding domain is found at 1648–1688 (DVNECETPGICGPGTCYNTVGNYTCICPPDYMQVNGGNNCM). A glycan (N-linked (GlcNAc...) asparagine) is linked at Asn-1669. In terms of domain architecture, TB 7 spans 1693 to 1748 (SLCYRNYYADNQTCDGELLFNMTKKMCCCSYNIGRAWNKPCEQCPIPSTDEFATLC). N-linked (GlcNAc...) asparagine glycosylation is found at Asn-1703 and Asn-1713. The EGF-like 29; calcium-binding domain occupies 1766–1807 (DIDECREIPGVCENGVCINMVGSFRCECPVGFFYNDKLLVCE). 40 disulfides stabilise this stretch: Cys-1770/Cys-1782, Cys-1777/Cys-1791, Cys-1793/Cys-1806, Cys-1812/Cys-1824, Cys-1818/Cys-1833, Cys-1835/Cys-1847, Cys-1853/Cys-1865, Cys-1860/Cys-1874, Cys-1876/Cys-1889, Cys-1895/Cys-1905, Cys-1900/Cys-1914, Cys-1916/Cys-1928, Cys-1934/Cys-1947, Cys-1942/Cys-1956, Cys-1958/Cys-1971, Cys-1977/Cys-1989, Cys-1984/Cys-1998, Cys-2000/Cys-2011, Cys-2017/Cys-2029, Cys-2024/Cys-2038, Cys-2040/Cys-2053, Cys-2061/Cys-2083, Cys-2070/Cys-2096, Cys-2084/Cys-2099, Cys-2085/Cys-2111, Cys-2131/Cys-2142, Cys-2137/Cys-2151, Cys-2153/Cys-2164, Cys-2170/Cys-2181, Cys-2176/Cys-2190, Cys-2192/Cys-2204, Cys-2210/Cys-2221, Cys-2217/Cys-2230, Cys-2232/Cys-2245, Cys-2251/Cys-2265, Cys-2258/Cys-2274, Cys-2276/Cys-2289, Cys-2295/Cys-2307, Cys-2302/Cys-2316, and Cys-2318/Cys-2331. Positions 1808 to 1848 (DIDECQNGPVCQRNAECINTAGSYRCDCKPGYRFTSTGQCN) constitute an EGF-like 30; calcium-binding domain. Ser-1830 is a glycosylation site (O-linked (Glc) serine). The 42-residue stretch at 1849–1890 (DRNECQEIPNICSHGQCIDTVGSFYCLCHTGFKTNDDQTMCL) folds into the EGF-like 31; calcium-binding domain. The O-linked (Glc) serine glycan is linked to Ser-1871. One can recognise an EGF-like 32; calcium-binding domain in the interval 1891–1929 (DINECERDACGNGTCRNTIGSFNCRCNHGFILSHNNDCI). Residue Asn-1902 is glycosylated (N-linked (GlcNAc...) asparagine). Residue Ser-1911 is glycosylated (O-linked (Glc) serine). In terms of domain architecture, EGF-like 33; calcium-binding spans 1930-1972 (DVDECASGNGNLCRNGQCINTVGSFQCQCNEGYEVAPDGRTCV). Ser-1953 is a glycosylation site (O-linked (Glc) serine). Positions 1973 to 2012 (DINECLLEPRKCAPGTCQNLDGSYRCICPPGYSLQNEKCE) constitute an EGF-like 34; calcium-binding domain. The 42-residue stretch at 2013-2054 (DIDECVEEPEICALGTCSNTEGSFKCLCPEGFSLSSSGRRCQ) folds into the EGF-like 35; calcium-binding domain. O-linked (Glc) serine glycosylation is present at Ser-2035. Residues 2059-2111 (SYCYAKFEGGKCSSPKSRNHSKQECCCALKGEGWGDPCELCPTEPDEAFRQIC) enclose the TB 8 domain. Asn-2077 carries N-linked (GlcNAc...) asparagine glycosylation. The 39-residue stretch at 2127 to 2165 (DMDECKEPDVCKHGQCINTDGSYRCECPFGYILAGNECV) folds into the EGF-like 36; calcium-binding domain. Residue Ser-2148 is glycosylated (O-linked (Glc) serine). Positions 2166–2205 (DTDECSVGNPCGNGTCKNVIGGFECTCEEGFEPGPMMTCE) constitute an EGF-like 37; calcium-binding domain. An N-linked (GlcNAc...) asparagine glycan is attached at Asn-2178. One can recognise an EGF-like 38; calcium-binding domain in the interval 2206 to 2246 (DINECAQNPLLCAFRCVNTYGSYECKCPVGYVLREDRRMCK). Residue Ser-2227 is glycosylated (O-linked (Glc) serine). An EGF-like 39; calcium-binding domain is found at 2247–2290 (DEDECEEGKHDCTEKQMECKNLIGTYMCICGPGYQRRPDGEGCV). The EGF-like 40; calcium-binding domain maps to 2291–2332 (DENECQTKPGICENGRCLNTRGSYTCECNDGFTASPNQDECL). O-linked (Glc) serine glycosylation occurs at Ser-2313. In terms of domain architecture, TB 9 spans 2337 to 2390 (GYCFTEVLQNMCQIGSSNRNPVTKSECCCDGGRGWGPHCEICPFQGTVAFKKLC). The region spanning 2402–2443 (DIDECKVIHDVCRNGECVNDRGSYHCICKTGYTPDITGTSCV) is the EGF-like 41; calcium-binding domain. 21 disulfide bridges follow: Cys-2406–Cys-2418, Cys-2413–Cys-2427, Cys-2429–Cys-2442, Cys-2448–Cys-2459, Cys-2455–Cys-2468, Cys-2470–Cys-2483, Cys-2489–Cys-2500, Cys-2496–Cys-2509, Cys-2511–Cys-2522, Cys-2528–Cys-2541, Cys-2535–Cys-2550, Cys-2552–Cys-2565, Cys-2571–Cys-2581, Cys-2577–Cys-2590, Cys-2592–Cys-2605, Cys-2611–Cys-2622, Cys-2617–Cys-2631, Cys-2633–Cys-2646, Cys-2652–Cys-2663, Cys-2659–Cys-2672, and Cys-2674–Cys-2686. The 41-residue stretch at 2444 to 2484 (DLNECNQAPKPCNFICKNTEGSYQCSCPKGYILQEDGRSCK) folds into the EGF-like 42; calcium-binding domain. A glycan (O-linked (Glc) serine) is linked at Ser-2465. One can recognise an EGF-like 43; calcium-binding domain in the interval 2485–2523 (DLDECATKQHNCQFLCVNTIGGFTCKCPPGFTQHHTSCI). One can recognise an EGF-like 44; calcium-binding domain in the interval 2524 to 2566 (DNNECTSDINLCGSKGICQNTPGSFTCECQRGFSLDQTGSSCE). O-linked (Glc) serine glycosylation occurs at Ser-2547. The 40-residue stretch at 2567-2606 (DVDECEGNHRCQHGCQNIIGGYRCSCPQGYLQHYQWNQCV) folds into the EGF-like 45; calcium-binding domain. Residues 2607–2647 (DENECLSAHICGGASCHNTLGSYKCMCPAGFQYEQFSGGCQ) form the EGF-like 46; calcium-binding domain. Ser-2628 carries an O-linked (Glc) serine glycan. Positions 2648 to 2687 (DINECGSAQAPCSYGCSNTEGGYLCGCPPGYFRIGQGHCV) constitute an EGF-like 47; calcium-binding domain. Phosphoserine; by FAM20C is present on Ser-2702. A Phosphoserine modification is found at Ser-2709. The disordered stretch occupies residues 2726 to 2746 (RGRKRRSTNETDASNIEDQSE). Asn-2734 carries N-linked (GlcNAc...) asparagine glycosylation. Positions 2735-2746 (ETDASNIEDQSE) are enriched in polar residues. N-linked (GlcNAc...) asparagine glycans are attached at residues Asn-2750 and Asn-2767.

It belongs to the fibrillin family. In terms of assembly, interacts with COL16A1. Interacts with integrin alpha-V/beta-3. Interacts with ADAMTS10; this interaction promotes microfibril assembly. Interacts with THSD4; this interaction promotes fibril formation. Interacts (via N-terminal domain) with FBLN2 and FBLN5. Interacts with ELN. Forms a ternary complex with ELN and FBLN2 or FBLN5 and a significant interaction with ELN seen only in the presence of FBLN2 or FBLN5. Interacts (via N-terminal domain) with LTBP2 (via C-terminal domain) in a Ca(+2)-dependent manner. Interacts (via N-terminal domain) with LTBP1 (via C-terminal domain). Interacts with integrins ITGA5:ITGB1, ITGAV:ITGB3 and ITGAV:ITGB6. Interacts (via N-terminal domain) with BMP2, BMP4, BMP7, BMP10 and GDF5. Interacts (via N-terminal domain) with MFAP2 and MFAP5. Interacts with ADAMTSL5. Interacts with MFAP4. Interacts (via N-terminal domain) with TNFSF11 in a Ca(+2)-dependent manner. Interacts (via N-terminal domain) with EFEMP2; this interaction inhibits EFEMP2 binding to LOX and ELN. Cleavage of N- and C-terminus by furin is required for incorporation into the extracellular matrix and assembly into microfibrils. The C-terminus, which corresponds to the Asprosin chain, was initially thought to constitute a propeptide. Fibrillin-1 and Asprosin chains are still linked together during the secretion from cells, but are subsequently separated by furin, an essential step for incorporation of Fibrillin-1 into the nascent microfibrils. In terms of processing, forms intermolecular disulfide bonds either with other fibrillin-1 molecules or with other components of the microfibrils. Post-translationally, O-glycosylated on serine residues by POGLUT2 and POGLUT3 which is necessary for efficient protein secretion.

It localises to the secreted. Its subcellular location is the extracellular space. The protein resides in the extracellular matrix. Its function is as follows. Structural component of the 10-12 nm diameter microfibrils of the extracellular matrix, which conveys both structural and regulatory properties to load-bearing connective tissues. Fibrillin-1-containing microfibrils provide long-term force bearing structural support. In tissues such as the lung, blood vessels and skin, microfibrils form the periphery of the elastic fiber, acting as a scaffold for the deposition of elastin. In addition, microfibrils can occur as elastin-independent networks in tissues such as the ciliary zonule, tendon, cornea and glomerulus where they provide tensile strength and have anchoring roles. Fibrillin-1 also plays a key role in tissue homeostasis through specific interactions with growth factors, such as the bone morphogenetic proteins (BMPs), growth and differentiation factors (GDFs) and latent transforming growth factor-beta-binding proteins (LTBPs), cell-surface integrins and other extracellular matrix protein and proteoglycan components. Regulates osteoblast maturation by controlling TGF-beta bioavailability and calibrating TGF-beta and BMP levels, respectively. Negatively regulates osteoclastogenesis by binding and sequestering an osteoclast differentiation and activation factor TNFSF11. This leads to disruption of TNFSF11-induced Ca(2+) signaling and impairment of TNFSF11-mediated nuclear translocation and activation of transcription factor NFATC1 which regulates genes important for osteoclast differentiation and function. Mediates cell adhesion via its binding to cell surface receptors integrins ITGAV:ITGB3 and ITGA5:ITGB1. Binds heparin and this interaction has an important role in the assembly of microfibrils. Adipokine secreted by white adipose tissue that plays an important regulatory role in the glucose metabolism of liver, muscle and pancreas. Hormone that targets the liver in response to fasting to increase plasma glucose levels. Binds the olfactory receptor OR4M1 at the surface of hepatocytes and promotes hepatocyte glucose release by activating the protein kinase A activity in the liver, resulting in rapid glucose release into the circulation. May act as a regulator of adaptive thermogenesis by inhibiting browning and energy consumption, while increasing lipid deposition in white adipose tissue. Also acts as an orexigenic hormone that increases appetite: crosses the blood brain barrier and exerts effects on the hypothalamus. In the arcuate nucleus of the hypothalamus, asprosin directly activates orexigenic AgRP neurons and indirectly inhibits anorexigenic POMC neurons, resulting in appetite stimulation. Activates orexigenic AgRP neurons via binding to the olfactory receptor OR4M1. May also play a role in sperm motility in testis via interaction with OR4M1 receptor. The sequence is that of Fibrillin-1 from Homo sapiens (Human).